The sequence spans 449 residues: Putative methylthiotransferase MJ0865 (449 aa).

One can recognise a Radical SAM core domain in the interval 163-390; sequence SIRGANVYIE…EGEYRKLGLS (228 aa). Cysteine 177, cysteine 181, and cysteine 184 together coordinate [4Fe-4S] cluster.

It belongs to the methylthiotransferase family. It depends on [4Fe-4S] cluster as a cofactor.

This chain is Putative methylthiotransferase MJ0865, found in Methanocaldococcus jannaschii (strain ATCC 43067 / DSM 2661 / JAL-1 / JCM 10045 / NBRC 100440) (Methanococcus jannaschii).